Here is a 223-residue protein sequence, read N- to C-terminus: Peroxynitrite isomerase 1 (223 aa).

The short motif at 69–75 is the GXWXGXG element; it reads GVWRGEG. The heme b site is built by lysine 186 and histidine 213.

It belongs to the nitrobindin family. As to quaternary structure, homodimer. Heme b is required as a cofactor.

It catalyses the reaction peroxynitrite = nitrate. It participates in nitrogen metabolism. In terms of biological role, heme-binding protein able to scavenge peroxynitrite and to protect free L-tyrosine against peroxynitrite-mediated nitration, by acting as a peroxynitrite isomerase that converts peroxynitrite to nitrate. Therefore, this protein likely plays a role in peroxynitrite sensing and in the detoxification of reactive nitrogen and oxygen species (RNS and ROS, respectively). Is able to bind nitric oxide (NO) in vitro, but may act as a sensor of peroxynitrite levels in vivo. The polypeptide is Peroxynitrite isomerase 1 (Mycobacterium marinum (strain ATCC BAA-535 / M)).